A 533-amino-acid chain; its full sequence is MTKFIFVTGGVVSGLGKGITSASLGMLMKARGFRTTNIKIDPYLNYDAGTMNPYQHGEVFVLDDGGEVDLDLGNYERFLDTSLSFDHNITTGKVYSAVIEKERKGEYLGATVQVIPHITNEIKERIRRIARDYDVVIVEIGGTVGDIEGMPFLEAARQMQLEEGRENVAFVHVTYVPKLKVVGEQKTKPTQHSVKELRSLGIQPDAIVARSEEPLEESARRKISLFTNVPEEAVISAYDVEDTYEVPLMLEKEGLARYLVRRLGLPEREPDLEKWREMVEKYKSLDKEVEIAIVGKYVKLADSYLSIKEALKHSSVANDVKVKIRWIEAEDVERKGVKLLEGVDGIIVPGGFGARGSEGKMMAIRYARENDIPFLGICFGFQLTVVEFARNVLGLKGAHSTEIDPQTPYPVVDLMPEQRDLDRLGGTMRLGAYPVHIKPNTLAKRLYGREIVYERHRHRWEVNPDYIEKLESAGLVFSGIAGDDERRMEILELPDHSYFIATQFHPEFKSRPMNPAPVFRGLVRAARERKYGG.

The amidoligase domain stretch occupies residues 1–265; it reads MTKFIFVTGG…ARYLVRRLGL (265 aa). Residue serine 13 participates in CTP binding. Serine 13 lines the UTP pocket. 14 to 19 serves as a coordination point for ATP; it reads GLGKGI. Tyrosine 54 is a binding site for L-glutamine. Aspartate 71 is an ATP binding site. Mg(2+) contacts are provided by aspartate 71 and glutamate 139. CTP contacts are provided by residues 146 to 148, 186 to 191, and lysine 222; these read DIE and KTKPTQ. Residues 186 to 191 and lysine 222 contribute to the UTP site; that span reads KTKPTQ. In terms of domain architecture, Glutamine amidotransferase type-1 spans 290–532; that stretch reads EIAIVGKYVK…VRAARERKYG (243 aa). Glycine 351 is an L-glutamine binding site. Catalysis depends on cysteine 378, which acts as the Nucleophile; for glutamine hydrolysis. Residues 379 to 382, glutamate 402, and arginine 459 each bind L-glutamine; that span reads FGFQ. Catalysis depends on residues histidine 505 and glutamate 507.

It belongs to the CTP synthase family. As to quaternary structure, homotetramer.

It catalyses the reaction UTP + L-glutamine + ATP + H2O = CTP + L-glutamate + ADP + phosphate + 2 H(+). The enzyme catalyses L-glutamine + H2O = L-glutamate + NH4(+). It carries out the reaction UTP + NH4(+) + ATP = CTP + ADP + phosphate + 2 H(+). It functions in the pathway pyrimidine metabolism; CTP biosynthesis via de novo pathway; CTP from UDP: step 2/2. With respect to regulation, allosterically activated by GTP, when glutamine is the substrate; GTP has no effect on the reaction when ammonia is the substrate. The allosteric effector GTP functions by stabilizing the protein conformation that binds the tetrahedral intermediate(s) formed during glutamine hydrolysis. Inhibited by the product CTP, via allosteric rather than competitive inhibition. Functionally, catalyzes the ATP-dependent amination of UTP to CTP with either L-glutamine or ammonia as the source of nitrogen. Regulates intracellular CTP levels through interactions with the four ribonucleotide triphosphates. This is CTP synthase from Thermococcus gammatolerans (strain DSM 15229 / JCM 11827 / EJ3).